We begin with the raw amino-acid sequence, 717 residues long: Glutamate--cysteine ligase (717 aa).

The tract at residues 484–576 (SKTTEQRAAK…TDSDHTDTDD (93 aa)) is disordered. Low complexity-rich tracts occupy residues 492–518 (AKAQ…NGNG) and 551–567 (GTTN…SNGT).

Belongs to the glutamate--cysteine ligase type 3 family.

The enzyme catalyses L-cysteine + L-glutamate + ATP = gamma-L-glutamyl-L-cysteine + ADP + phosphate + H(+). It carries out the reaction (2S)-2-aminobutanoate + L-glutamate + ATP = gamma-L-glutamyl-(2S)-2-aminobutanoate + ADP + phosphate + H(+). The protein operates within sulfur metabolism; glutathione biosynthesis; glutathione from L-cysteine and L-glutamate: step 1/2. Functionally, catalyzes the ATP-dependent ligation of L-glutamate and L-cysteine and participates in the first and rate-limiting step in glutathione biosynthesis. The chain is Glutamate--cysteine ligase from Drosophila melanogaster (Fruit fly).